Reading from the N-terminus, the 251-residue chain is Triosephosphate isomerase (251 aa).

Residue 9 to 11 (NWK) participates in substrate binding. Histidine 95 acts as the Electrophile in catalysis. Glutamate 167 (proton acceptor) is an active-site residue. Substrate-binding positions include glycine 173, serine 212, and 233 to 234 (GG).

Belongs to the triosephosphate isomerase family. Homodimer.

The protein localises to the cytoplasm. The enzyme catalyses D-glyceraldehyde 3-phosphate = dihydroxyacetone phosphate. The protein operates within carbohydrate biosynthesis; gluconeogenesis. Its pathway is carbohydrate degradation; glycolysis; D-glyceraldehyde 3-phosphate from glycerone phosphate: step 1/1. Involved in the gluconeogenesis. Catalyzes stereospecifically the conversion of dihydroxyacetone phosphate (DHAP) to D-glyceraldehyde-3-phosphate (G3P). The polypeptide is Triosephosphate isomerase (Pseudomonas paraeruginosa (strain DSM 24068 / PA7) (Pseudomonas aeruginosa (strain PA7))).